The following is a 305-amino-acid chain: tRNA pseudouridine synthase B (305 aa).

Asp39 acts as the Nucleophile in catalysis.

The protein belongs to the pseudouridine synthase TruB family. Type 1 subfamily.

It carries out the reaction uridine(55) in tRNA = pseudouridine(55) in tRNA. In terms of biological role, responsible for synthesis of pseudouridine from uracil-55 in the psi GC loop of transfer RNAs. In Staphylococcus haemolyticus (strain JCSC1435), this protein is tRNA pseudouridine synthase B.